A 167-amino-acid polypeptide reads, in one-letter code: Peptide deformylase (167 aa).

The Fe cation site is built by cysteine 90 and histidine 132. Glutamate 133 is an active-site residue. Histidine 136 contacts Fe cation.

Belongs to the polypeptide deformylase family. The cofactor is Fe(2+).

The catalysed reaction is N-terminal N-formyl-L-methionyl-[peptide] + H2O = N-terminal L-methionyl-[peptide] + formate. Its function is as follows. Removes the formyl group from the N-terminal Met of newly synthesized proteins. Requires at least a dipeptide for an efficient rate of reaction. N-terminal L-methionine is a prerequisite for activity but the enzyme has broad specificity at other positions. The protein is Peptide deformylase of Dehalococcoides mccartyi (strain ATCC BAA-2100 / JCM 16839 / KCTC 5957 / BAV1).